Here is a 1117-residue protein sequence, read N- to C-terminus: Cytospin-A (1117 aa).

3 disordered regions span residues 1 to 176 (MKKA…NQIS), 293 to 323 (SLSPEITPGNQSDGGGTLTSSVEGSAPGSVE), and 358 to 390 (SSDDALDAPSSSESEGIPSIERSRKGSSGNASE). Over residues 45 to 90 (TAASLSKTKSSDDLLAGMAGGVTVTNGVKGKKSTCPSAAPSASAPA) the composition is skewed to low complexity. Over residues 93-117 (TVENKSKISTGTASSTKRSTSTGNK) the composition is skewed to polar residues. Composition is skewed to basic and acidic residues over residues 120 to 131 (SSTRERLRERTR) and 158 to 171 (TATECDVRMSKSKS). Positions 168-280 (KSKSDNQISD…LNALGFSLEQ (113 aa)) form a coiled coil. Polar residues predominate over residues 293–303 (SLSPEITPGNQ). Residues 358 to 377 (SSDDALDAPSSSESEGIPSI) are compositionally biased toward low complexity. Phosphoserine occurs at positions 384, 385, and 389. 2 coiled-coil regions span residues 394 to 449 (ACLT…MESL) and 487 to 807 (RYME…RGRV). Phosphoserine is present on residues Ser-868, Ser-881, and Ser-887. Residues 920-997 (TSSASRPASL…PTTRSRIREE (78 aa)) form a disordered region. The span at 946–956 (RSSEEVKRDIS) shows a compositional bias: basic and acidic residues. The segment covering 971–990 (TTSPQLSLSSSPTASVTPTT) has biased composition (low complexity). The Calponin-homology (CH) domain maps to 1011–1116 (GSKRNALLKW…YVTAIYKYFE (106 aa)).

This sequence belongs to the cytospin-A family. As to quaternary structure, may interact with both microtubules and actin cytoskeleton.

The protein localises to the cytoplasm. The protein resides in the cytoskeleton. It localises to the spindle. It is found in the cell junction. Its subcellular location is the gap junction. Functionally, involved in cytokinesis and spindle organization. May play a role in actin cytoskeleton organization and microtubule stabilization and hence required for proper cell adhesion and migration. The sequence is that of Cytospin-A (SPECC1L) from Homo sapiens (Human).